The primary structure comprises 226 residues: Urease accessory protein UreF (226 aa).

This sequence belongs to the UreF family. UreD, UreF and UreG form a complex that acts as a GTP-hydrolysis-dependent molecular chaperone, activating the urease apoprotein by helping to assemble the nickel containing metallocenter of UreC. The UreE protein probably delivers the nickel.

It is found in the cytoplasm. Functionally, required for maturation of urease via the functional incorporation of the urease nickel metallocenter. The protein is Urease accessory protein UreF of Paraburkholderia phymatum (strain DSM 17167 / CIP 108236 / LMG 21445 / STM815) (Burkholderia phymatum).